A 155-amino-acid polypeptide reads, in one-letter code: RNA-binding protein 3 (155 aa).

The RRM domain occupies glycine 6–lysine 84. Arginine 47 is modified (omega-N-methylarginine). The disordered stretch occupies residues valine 79–asparagine 155. An Asymmetric dimethylarginine; alternate modification is found at arginine 105. A Dimethylated arginine; alternate modification is found at arginine 105. Arginine 105 carries the omega-N-methylarginine; alternate modification. Residues arginine 105 to serine 114 are compositionally biased toward gly residues. Residues arginine 120 and arginine 130 each carry the omega-N-methylarginine modification. Serine 135 and serine 145 each carry phosphoserine. Tyrosine 153 is modified (phosphotyrosine).

In terms of assembly, interacts with RPL4. Associates with the 60S ribosomal subunits. In terms of processing, arg-105 is dimethylated, probably to asymmetric dimethylarginine. Phosphorylated. Isoform 2 is methylated. As to expression, widely expressed in the brain. Highly expressed in the cerebellum and olfactory bulb (at protein level). Expressed in neurons and glial cells.

It is found in the nucleus. The protein resides in the cytoplasm. Its subcellular location is the cell projection. The protein localises to the dendrite. In terms of biological role, cold-inducible mRNA binding protein that enhances global protein synthesis at both physiological and mild hypothermic temperatures. Reduces the relative abundance of microRNAs, when overexpressed. Enhances phosphorylation of translation initiation factors and active polysome formation. The chain is RNA-binding protein 3 (Rbm3) from Rattus norvegicus (Rat).